Here is a 546-residue protein sequence, read N- to C-terminus: Alpha-taxilin (546 aa).

Disordered stretches follow at residues 1–170 (MKNQ…GLGK) and 482–546 (NKRV…SARA). Polar residues predominate over residues 11 to 21 (AKQSNPKSSPG). Composition is skewed to basic and acidic residues over residues 70–80 (DVSEELSRQLE) and 143–158 (EEIRQSDEVGDRDHRR). Serine 72 bears the Phosphoserine mark. The stretch at 186-491 (EEKLAALCKK…NKRVQDLSAG (306 aa)) forms a coiled coil. Residue serine 515 is modified to Phosphoserine. The segment covering 530–546 (TEASGQTGPQEPTSARA) has biased composition (polar residues).

The protein belongs to the taxilin family. As to quaternary structure, binds to the C-terminal coiled coil region of syntaxin family members STX1A, STX3A and STX4A, but not when these proteins are complexed with SNAP25, VAMP2 or STXBP1, suggesting that it interacts with syntaxins that do not form the SNARE complex. Ubiquitous, with much higher expression in heart, kidney, liver and pancreas.

Functionally, may be involved in intracellular vesicle traffic and potentially in calcium-dependent exocytosis in neuroendocrine cells. The protein is Alpha-taxilin (TXLNA) of Homo sapiens (Human).